Here is a 74-residue protein sequence, read N- to C-terminus: Translation initiation factor IF-1 (74 aa).

In terms of domain architecture, S1-like spans 1–72; that stretch reads MAKETEMEFE…TRGRITYRKI (72 aa).

Belongs to the IF-1 family. As to quaternary structure, component of the 30S ribosomal translation pre-initiation complex which assembles on the 30S ribosome in the order IF-2 and IF-3, IF-1 and N-formylmethionyl-tRNA(fMet); mRNA recruitment can occur at any time during PIC assembly.

The protein localises to the cytoplasm. Its function is as follows. One of the essential components for the initiation of protein synthesis. Stabilizes the binding of IF-2 and IF-3 on the 30S subunit to which N-formylmethionyl-tRNA(fMet) subsequently binds. Helps modulate mRNA selection, yielding the 30S pre-initiation complex (PIC). Upon addition of the 50S ribosomal subunit IF-1, IF-2 and IF-3 are released leaving the mature 70S translation initiation complex. The chain is Translation initiation factor IF-1 from Mycoplasma capricolum subsp. capricolum (strain California kid / ATCC 27343 / NCTC 10154).